The sequence spans 86 residues: Small ribosomal subunit protein bS20 (86 aa).

It belongs to the bacterial ribosomal protein bS20 family.

Its function is as follows. Binds directly to 16S ribosomal RNA. This Arthrobacter sp. (strain FB24) protein is Small ribosomal subunit protein bS20.